The sequence spans 252 residues: tRNA pseudouridine synthase A (252 aa).

D52 (nucleophile) is an active-site residue. Y111 contributes to the substrate binding site.

It belongs to the tRNA pseudouridine synthase TruA family. As to quaternary structure, homodimer.

The catalysed reaction is uridine(38/39/40) in tRNA = pseudouridine(38/39/40) in tRNA. Functionally, formation of pseudouridine at positions 38, 39 and 40 in the anticodon stem and loop of transfer RNAs. This is tRNA pseudouridine synthase A from Parabacteroides distasonis (strain ATCC 8503 / DSM 20701 / CIP 104284 / JCM 5825 / NCTC 11152).